A 350-amino-acid chain; its full sequence is Small ribosomal subunit biogenesis GTPase RsgA (350 aa).

Over residues 1–17 (MSKNKLSKGQQRRVNAN) the composition is skewed to polar residues. The interval 1 to 33 (MSKNKLSKGQQRRVNANHQRRLKTSKEKPDYDD) is disordered. A CP-type G domain is found at 104–273 (TSVLTRPDFY…VIDSPGVREF (170 aa)). GTP is bound by residues 160 to 163 (NKID) and 214 to 222 (GQSGVGKSS). Residues cysteine 297, cysteine 302, histidine 304, and cysteine 310 each coordinate Zn(2+).

Belongs to the TRAFAC class YlqF/YawG GTPase family. RsgA subfamily. Monomer. Associates with 30S ribosomal subunit, binds 16S rRNA. Zn(2+) serves as cofactor.

It localises to the cytoplasm. Its function is as follows. One of several proteins that assist in the late maturation steps of the functional core of the 30S ribosomal subunit. Helps release RbfA from mature subunits. May play a role in the assembly of ribosomal proteins into the subunit. Circularly permuted GTPase that catalyzes slow GTP hydrolysis, GTPase activity is stimulated by the 30S ribosomal subunit. This chain is Small ribosomal subunit biogenesis GTPase RsgA, found in Escherichia fergusonii (strain ATCC 35469 / DSM 13698 / CCUG 18766 / IAM 14443 / JCM 21226 / LMG 7866 / NBRC 102419 / NCTC 12128 / CDC 0568-73).